A 1918-amino-acid chain; its full sequence is NFX1-type zinc finger-containing protein 1 (1918 aa).

A compositionally biased stretch (basic and acidic residues) spans 1–12 (MEERRPHLDARP). 2 disordered regions span residues 1–58 (MEER…RANN) and 75–140 (RNPH…QPQQ). The span at 30 to 42 (RARNQANNPPANA) shows a compositional bias: low complexity. Over residues 82–105 (RNQEGHASDEARDQRHDQENDTRW) the composition is skewed to basic and acidic residues. The span at 120–129 (SNDNFQQWRT) shows a compositional bias: polar residues. Residues 286 to 313 (DIEEETEKNLEKVQTIIEHLQEKRREGT) are a coiled coil. 2 disordered regions span residues 796–819 (SVSPAGPENTAQAEGDEEEEGEEE) and 876–896 (TAAGQEQATGEWQTQRNQKKK). Positions 809-819 (EGDEEEEGEEE) are enriched in acidic residues. Polar residues predominate over residues 877-887 (AAGQEQATGEW). Residues 886–967 (EWQTQRNQKK…TSAERMAELR (82 aa)) are a coiled coil. 6 consecutive NF-X1-type zinc fingers follow at residues 1298–1320 (CGHVCTRACHPYDSSHKEFQCMK), 1330–1346 (GHRCPLVCFQECQPCQV), 1382–1400 (CGHRCSHPCGEDCVQLCSE), 1441–1463 (CGHPCPGSCHSCFEGRFHERCQQ), 1471–1488 (CSHKCQEPCIGECPPCQR), and 1546–1564 (CGHPCIGLCGEPCPKKCRI). The stretch at 1741-1820 (LAKKRLSFTS…EKMEALKATL (80 aa)) forms a coiled coil. An RZ-type zinc finger spans residues 1827-1898 (ISEEERVQIV…LASEMDGAQH (72 aa)). The Zn(2+) site is built by Cys-1849, His-1853, Cys-1869, and Cys-1872.

It belongs to the ZNFX1 family. In terms of assembly, interacts with MAVS. As to expression, widely expressed.

Its subcellular location is the mitochondrion outer membrane. The protein resides in the cytoplasm. The protein localises to the stress granule. Functionally, RNA-binding protein that initiates the antiviral response and is required to restrict the replication of RNA viruses. Acts as a double-stranded RNA (dsRNA) sensor that recognizes viral RNA and then interacts with MAVS to initiate the type I interferon response. Also required for immunity against some bacteria, such as mycobacteria. The polypeptide is NFX1-type zinc finger-containing protein 1 (Homo sapiens (Human)).